The sequence spans 380 residues: 3-methylitaconate isomerase (380 aa).

It belongs to the PrpF family. Homotetramer.

The catalysed reaction is 2-methylene-3-methylsuccinate = dimethylmaleate. It functions in the pathway cofactor degradation; nicotinate degradation; propanoate and pyruvate from 6-hydroxynicotinate: step 6/8. Inhibited by oxidized glutathione, p-chloromercuriphenylsulfonic acid and iodoacetic acid. Not inhibited by the chelating agent alpha,alpha-dipyridyl. Activity is slightly increased by EDTA. Not activated by Fe(2+), Mg(2+), Mn(2+) or Ca(2+). Unaffected by K(+), Na(+), NH4(+), Rb(+) or Li(+). Catalyzes the reversible isomerization of (R)-3-methylitaconate to 2,3-dimethylmaleate. Has very low isomerase activity with itaconate. The chain is 3-methylitaconate isomerase (mii) from Eubacterium barkeri (Clostridium barkeri).